A 329-amino-acid chain; its full sequence is NAD kinase (329 aa).

A disordered region spans residues 1–26 (MTTPGTDHNADQGADSGDKATKAASG). Residue Asp104 is the Proton acceptor of the active site. Residues 104–105 (DG), Arg109, 179–180 (NE), Asp209, and 220–225 (TAYAFS) each bind NAD(+).

It belongs to the NAD kinase family. Requires a divalent metal cation as cofactor.

It is found in the cytoplasm. The enzyme catalyses NAD(+) + ATP = ADP + NADP(+) + H(+). In terms of biological role, involved in the regulation of the intracellular balance of NAD and NADP, and is a key enzyme in the biosynthesis of NADP. Catalyzes specifically the phosphorylation on 2'-hydroxyl of the adenosine moiety of NAD to yield NADP. This Corynebacterium jeikeium (strain K411) protein is NAD kinase.